The following is a 1168-amino-acid chain: MTILTTLIKEDNHFQDLNQVFGQANTLVTGLSPSAKVTMIAEKYAQSNQQLLLITNNLYQADKLETDLLQFIDAEELYKYPVQDIMTEEFSTQSPQLMSERIRTLTALAQGKKGLFIVPLNGLKKWLTSVEMWQNHQMTLRVGEDIDVDQFLNKLVNMGYKRESVVSHIGEFSLRGGIIDIFPLIGEPIRIELFDTEIDSIRDFDVETQRSKDNIEEVDITTASDYIITEEVIRHLKEELKTAYENTRPKIDKSVRNDLKETYESFKLFESTYFDHQILRRLVAFMYETPSTIIDYFQKDAIIAVDEFNRIKETEESLTVESDSFISNIIESGNGFIGQSFIKYDDFETLIEGYPVTYFSLFATTMPIKLNHIIKFSCKPVQQFYGQYDIMRSEFQRYVNQNYHIVVLVETETKVERMQAMLSEMHIPSITKLHRSMSSGQAVIIEGSLSEGFELPDMGLVVITERELFKSKQKKQRKRTKAISNAEKIKSYQDLNVGDYIVHVHHGVGRYLGVETLEVGQTHRDYIKLQYKGTDQLFVPVDQMDQVQKYVASEDKTPKLNKLGGSEWKKTKAKVQQSVEDIAEELIDLYKEREMAEGYQYGEDTAEQTTFELDFPYELTPDQAKSIDEIKDDMQKSRPMDRLLCGDVGYGKTEVAVRAAFKAVMEGKQVAFLVPTTILAQQHYETLIERMQDFPVEIQLMSRFRTPKEIKQTKEGLKTGFVDIVVGTHKLLSKDIQYKDLGLLIVDEEQRFGVRHKERIKTLKHNVDVLTLTATPIPRTLHMSMLGVRDLSVIETPPENRFPVQTYVLEQNMSFIKEALERELSRDGQVFYLYNKVQSIYEKREQLQMLMPDANIAVAHGQMTERDLEETMLSFINNEYDILVTTTIIETGVDVPNANTLIIEDADRFGLSQLYQLRGRVGRSSRIGYAYFLHPANKVLTETAEDRLQAIKEFTELGSGFKIAMRDLNIRGAGNLLGKQQHGFIDTVGFDLYSQMLEEAVNEKRGIKEPESEVPEVEVDLNLDAYLPTEYIANEQAKIEIYKKLRKTETFDQIIDIKDELIDRFNDYPVEVARLLDIVEIKVHALHSGITLIKDKGKIIDIHLSVKATENIDGEVLFKATQPLGRTMKVGVQNNAMTITLTKQNQWLDSLKFLVKCIEESMRISDEA.

Residues 633–794 form the Helicase ATP-binding domain; it reads DMQKSRPMDR…MLGVRDLSVI (162 aa). Residue 646–653 participates in ATP binding; sequence GDVGYGKT. A DEEQ box motif is present at residues 747–750; it reads DEEQ. The 162-residue stretch at 808 to 969 folds into the Helicase C-terminal domain; sequence VLEQNMSFIK…GFKIAMRDLN (162 aa).

The protein in the N-terminal section; belongs to the UvrB family. It in the C-terminal section; belongs to the helicase family. RecG subfamily.

The protein resides in the cytoplasm. Its function is as follows. Couples transcription and DNA repair by recognizing RNA polymerase (RNAP) stalled at DNA lesions. Mediates ATP-dependent release of RNAP and its truncated transcript from the DNA, and recruitment of nucleotide excision repair machinery to the damaged site. The polypeptide is Transcription-repair-coupling factor (Staphylococcus aureus (strain bovine RF122 / ET3-1)).